The chain runs to 362 residues: Putative HLA class I histocompatibility antigen, alpha chain H (362 aa).

A signal peptide spans 1–24 (MVLMAPRTLLLLLSGALALTQTWA). Positions 25-114 (RSHSMRYFYT…ALRYYNQSEG (90 aa)) are alpha-1. Residues 25–308 (RSHSMRYFYT…EPSSQPTVPI (284 aa)) lie on the Extracellular side of the membrane. Asparagine 110 carries an N-linked (GlcNAc...) asparagine glycan. An alpha-2 region spans residues 115-206 (GSHTMQVMYG…ENGKETLQRA (92 aa)). Residues 207–298 (DPPKTHMTHH…GLPEPLTLRW (92 aa)) form an alpha-3 region. In terms of domain architecture, Ig-like C1-type spans 209–297 (PKTHMTHHPI…EGLPEPLTLR (89 aa)). A disulfide bridge links cysteine 227 with cysteine 283. A connecting peptide region spans residues 299 to 308 (EPSSQPTVPI). The chain crosses the membrane as a helical span at residues 309-332 (VGIVAGLVLLVAVVTGAVVAAVMW). Residues 333–362 (RKKSSDRKGGSYSQAASSNSAQGSDVSLTA) lie on the Cytoplasmic side of the membrane. The tract at residues 337–362 (SDRKGGSYSQAASSNSAQGSDVSLTA) is disordered. Residues 342 to 356 (GSYSQAASSNSAQGS) show a composition bias toward low complexity.

The protein belongs to the MHC class I family. As to quaternary structure, heterodimer of an alpha chain and a beta chain (beta-2-microglobulin).

It is found in the cell membrane. Involved in the presentation of foreign antigens to the immune system. In Homo sapiens (Human), this protein is Putative HLA class I histocompatibility antigen, alpha chain H (HLA-H).